Consider the following 125-residue polypeptide: MIRGIGIDIVEVNRISDMVDKWGERFLNKVYTPYEVNYCKFKSNTYECLAGRFAAKEAFVKMLGTGFKHIYFKDIEVRSDEKGKPYLRIKGNADRLTKESGIKRIHLSISHERKFAIAFVVGEEG.

Mg(2+) is bound by residues Asp-8 and Glu-57.

It belongs to the P-Pant transferase superfamily. AcpS family. Mg(2+) serves as cofactor.

The protein resides in the cytoplasm. The catalysed reaction is apo-[ACP] + CoA = holo-[ACP] + adenosine 3',5'-bisphosphate + H(+). Its function is as follows. Transfers the 4'-phosphopantetheine moiety from coenzyme A to a Ser of acyl-carrier-protein. This Halothermothrix orenii (strain H 168 / OCM 544 / DSM 9562) protein is Holo-[acyl-carrier-protein] synthase.